The primary structure comprises 199 residues: Ribonuclease HII (199 aa).

The region spanning 1 to 199 (MCVCGIDEAG…TYKNLVQGHI (199 aa)) is the RNase H type-2 domain. Positions 7, 8, and 97 each coordinate a divalent metal cation.

This sequence belongs to the RNase HII family. Requires Mn(2+) as cofactor. Mg(2+) serves as cofactor.

The protein resides in the cytoplasm. The enzyme catalyses Endonucleolytic cleavage to 5'-phosphomonoester.. Its function is as follows. Endonuclease that specifically degrades the RNA of RNA-DNA hybrids. This is Ribonuclease HII from Picrophilus torridus (strain ATCC 700027 / DSM 9790 / JCM 10055 / NBRC 100828 / KAW 2/3).